The primary structure comprises 292 residues: Cbb3-type cytochrome c oxidase subunit CcoP (292 aa).

Transmembrane regions (helical) follow at residues 11 to 31 (FGLI…SSLI) and 62 to 82 (VGWI…FFFG). Cytochrome c domains lie at 116 to 195 (ELVD…MAEI) and 205 to 288 (QLID…QSLK). 8 residues coordinate heme c: cysteine 129, cysteine 132, histidine 133, methionine 174, cysteine 219, cysteine 222, histidine 223, and methionine 264.

This sequence belongs to the CcoP / FixP family. As to quaternary structure, component of the cbb3-type cytochrome c oxidase at least composed of CcoN, CcoO, CcoQ and CcoP. It depends on heme c as a cofactor.

It is found in the cell inner membrane. The protein operates within energy metabolism; oxidative phosphorylation. In terms of biological role, C-type cytochrome. Part of the cbb3-type cytochrome c oxidase complex. CcoP subunit is required for transferring electrons from donor cytochrome c via its heme groups to CcoO subunit. From there, electrons are shuttled to the catalytic binuclear center of CcoN subunit where oxygen reduction takes place. The complex also functions as a proton pump. The protein is Cbb3-type cytochrome c oxidase subunit CcoP of Helicobacter pylori (strain 52).